Reading from the N-terminus, the 356-residue chain is (+)-(1(10)E,4E,6S,7R)-germacradien-6-ol synthase (356 aa).

Mg(2+)-binding residues include aspartate 86 and aspartate 91. The short motif at 86 to 91 (DDEYCD) is the DDXXXD motif element. Position 181 (arginine 181) interacts with substrate. Residues asparagine 227 and serine 231 each contribute to the Mg(2+) site. Lysine 234 provides a ligand contact to substrate. Glutamate 235 provides a ligand contact to Mg(2+). Residue 314-315 (RY) coordinates substrate.

Belongs to the terpene synthase family. It depends on Mg(2+) as a cofactor.

It catalyses the reaction (2E,6E)-farnesyl diphosphate + H2O = (+)-(1(10)E,4E,6S,7R)-germacradien-6-ol + diphosphate. Its pathway is secondary metabolite biosynthesis; terpenoid biosynthesis. Catalyzes the conversion of (2E,6E)-farnesyl diphosphate (FPP) to yield the sesquiterpene (+)-(1(10)E,4E,6S,7R)-germacradien-6-ol via a putative 1,10-cyclization, which could require the abstraction of the pyrophosphate from FPP to yield the (E,E)-germacradienyl cation. The only accepted substrate is farnesyl diphosphate (FPP). The polypeptide is (+)-(1(10)E,4E,6S,7R)-germacradien-6-ol synthase (Streptomyces pratensis (strain ATCC 33331 / IAF-45CD)).